Here is a 122-residue protein sequence, read N- to C-terminus: Large ribosomal subunit protein uL14 (122 aa).

It belongs to the universal ribosomal protein uL14 family. Part of the 50S ribosomal subunit. Forms a cluster with proteins L3 and L19. In the 70S ribosome, L14 and L19 interact and together make contacts with the 16S rRNA in bridges B5 and B8.

In terms of biological role, binds to 23S rRNA. Forms part of two intersubunit bridges in the 70S ribosome. In Kineococcus radiotolerans (strain ATCC BAA-149 / DSM 14245 / SRS30216), this protein is Large ribosomal subunit protein uL14.